The following is a 463-amino-acid chain: Exodeoxyribonuclease 7 large subunit (463 aa).

The protein belongs to the XseA family. In terms of assembly, heterooligomer composed of large and small subunits.

The protein resides in the cytoplasm. The catalysed reaction is Exonucleolytic cleavage in either 5'- to 3'- or 3'- to 5'-direction to yield nucleoside 5'-phosphates.. Bidirectionally degrades single-stranded DNA into large acid-insoluble oligonucleotides, which are then degraded further into small acid-soluble oligonucleotides. This is Exodeoxyribonuclease 7 large subunit from Pseudomonas syringae pv. syringae (strain B728a).